We begin with the raw amino-acid sequence, 240 residues long: Ribonuclease PH (240 aa).

Residues R87 and 125–127 each bind phosphate; that span reads GTR.

The protein belongs to the RNase PH family. As to quaternary structure, homohexameric ring arranged as a trimer of dimers.

The catalysed reaction is tRNA(n+1) + phosphate = tRNA(n) + a ribonucleoside 5'-diphosphate. Its function is as follows. Phosphorolytic 3'-5' exoribonuclease that plays an important role in tRNA 3'-end maturation. Removes nucleotide residues following the 3'-CCA terminus of tRNAs; can also add nucleotides to the ends of RNA molecules by using nucleoside diphosphates as substrates, but this may not be physiologically important. Probably plays a role in initiation of 16S rRNA degradation (leading to ribosome degradation) during starvation. This chain is Ribonuclease PH, found in Ruminiclostridium cellulolyticum (strain ATCC 35319 / DSM 5812 / JCM 6584 / H10) (Clostridium cellulolyticum).